The following is a 359-amino-acid chain: Transcription elongation factor A N-terminal and central domain-containing protein (359 aa).

In terms of domain architecture, TFIIS N-terminal spans M1–T82. Residues C84–S118 form a disordered region. A compositionally biased stretch (polar residues) spans A104–S118. Positions V182–G298 constitute a TFIIS central domain.

In Mus musculus (Mouse), this protein is Transcription elongation factor A N-terminal and central domain-containing protein (Tceanc).